Consider the following 64-residue polypeptide: Large ribosomal subunit protein bL35 (64 aa).

The protein belongs to the bacterial ribosomal protein bL35 family.

This Shewanella sediminis (strain HAW-EB3) protein is Large ribosomal subunit protein bL35.